The following is a 95-amino-acid chain: uncharacterized protein (95 aa).

The helical transmembrane segment at Ser27–Thr47 threads the bilayer.

It is found in the membrane. This is an uncharacterized protein from Homo sapiens (Human).